A 219-amino-acid polypeptide reads, in one-letter code: Lipid transferase CIDEB (219 aa).

The region spanning 34 to 110 is the CIDE-N domain; it reads PQRPFRVCDH…VLQSGQSWSP (77 aa).

This sequence belongs to the CIDE family. Interacts with DFFA. Interacts with DFFB; inhibited by DFFB. Interacts with APOB. Interacts with PREB/SEC12; facilitating loading of SCAP-SREBP into COPII vesicles. As to quaternary structure, (Microbial infection) Interacts (via N-terminus) with HCV non-structural protein 5A (via N-terminus); this interaction seems to regulate the association of HCV particles with ApoE. As to expression, highly expressed in liver and small intestine and, at lower levels, in colon, kidney and spleen.

The protein resides in the lipid droplet. Its subcellular location is the endoplasmic reticulum membrane. It localises to the golgi apparatus. It is found in the cytoplasmic vesicle. The protein localises to the COPI-coated vesicle. Its function is as follows. Lipid transferase specifically expressed in hepatocytes, which promotes unilocular lipid droplet formation by mediating lipid droplet fusion. Lipid droplet fusion promotes their enlargement, restricting lipolysis and favoring lipid storage. Localizes on the lipid droplet surface, at focal contact sites between lipid droplets, and mediates atypical lipid droplet fusion by promoting directional net neutral lipid transfer from the smaller to larger lipid droplets. The transfer direction may be driven by the internal pressure difference between the contacting lipid droplet pair. Promotes lipid exchange and lipid droplet fusion in both small and large lipid droplet-containing hepatocytes. In addition to its role in lipid droplet fusion, also involved in cytoplasmic vesicle biogenesis and transport. Required for very-low-density lipoprotein (VLDL) lipidation and maturation. Probably involved in the biogenesis of VLDL transport vesicles by forming a COPII vesicle coat and facilitating the formation of endoplasmic reticulum-derived large vesicles. Also involved in sterol-regulated export of the SCAP-SREBP complex, composed of SCAP, SREBF1/SREBP1 and SREBF2/SREBP2, by promoting loading of SCAP-SREBP into COPII vesicles. May also activate apoptosis. (Microbial infection) Involved in Hepatatis C virus (HCV) assembly and required for HCV entry into hepatocytes. The chain is Lipid transferase CIDEB from Homo sapiens (Human).